Consider the following 262-residue polypeptide: MNPDVNAISPAEARRRFRDGLVTPTAGWSAGYAQANLIAVPRDYAFDLMLFAQRNPKPCPVLDVLEPGQYAGPLLAGGDIRTDIPAYRIYVDGELVTEVADATEYWTDDLVAFLIGCSFSFEAALLDSGVPVRHIEEDVNVPMYRTDRPCRSAGRIGGPLVVSMRPLPPEQVADAVRITSRYPSVHGTPVHVGDPAGLGIAHLSAPDYGDAVTIRPGEIPVFWACGVTPQAAVMQSRPPLAIGHAPGHMLITDLRDSELVVP.

Belongs to the D-glutamate cyclase family.

This chain is Putative hydro-lyase Mflv_5194, found in Mycolicibacterium gilvum (strain PYR-GCK) (Mycobacterium gilvum (strain PYR-GCK)).